A 67-amino-acid chain; its full sequence is Protein AaeX (67 aa).

2 consecutive transmembrane segments (helical) span residues 9–29 and 47–67; these read IFGLSFPPVFFELLVPLALFF and PALFNTALYCCLFYLISCLFV.

The protein belongs to the AaeX family.

The protein localises to the cell membrane. This Serratia marcescens protein is Protein AaeX.